A 344-amino-acid polypeptide reads, in one-letter code: Aspartate carbamoyltransferase catalytic subunit (344 aa).

Positions 1–30 are disordered; sequence MPESPPLPKRSPLMTSSTTRPASDYPPGGD. Carbamoyl phosphate-binding residues include R88 and T89. K116 contributes to the L-aspartate binding site. Positions 138, 166, and 169 each coordinate carbamoyl phosphate. 2 residues coordinate L-aspartate: R199 and R253. The carbamoyl phosphate site is built by G294 and P295.

It belongs to the aspartate/ornithine carbamoyltransferase superfamily. ATCase family. Heterododecamer (2C3:3R2) of six catalytic PyrB chains organized as two trimers (C3), and six regulatory PyrI chains organized as three dimers (R2).

It catalyses the reaction carbamoyl phosphate + L-aspartate = N-carbamoyl-L-aspartate + phosphate + H(+). The protein operates within pyrimidine metabolism; UMP biosynthesis via de novo pathway; (S)-dihydroorotate from bicarbonate: step 2/3. Catalyzes the condensation of carbamoyl phosphate and aspartate to form carbamoyl aspartate and inorganic phosphate, the committed step in the de novo pyrimidine nucleotide biosynthesis pathway. This chain is Aspartate carbamoyltransferase catalytic subunit, found in Sphingopyxis alaskensis (strain DSM 13593 / LMG 18877 / RB2256) (Sphingomonas alaskensis).